The chain runs to 66 residues: Nigrocin-2GRa (66 aa).

An N-terminal signal peptide occupies residues 1 to 22 (MFTLKKSQLLLFFPGTINLSLC). Residues 23–45 (QDETNAEEERRDEEVAKMEEIKR) constitute a propeptide that is removed on maturation. Cys-60 and Cys-66 are oxidised to a cystine.

Expressed by the skin glands.

It localises to the secreted. Functionally, antimicrobial peptide active at least against the Gram-positive bacterium S.aureus but with otherwise unclear activity spectrum. Lacks hemolytic activity against rabbit or human erythrocytes. The sequence is that of Nigrocin-2GRa from Odorrana grahami (Yunnanfu frog).